The primary structure comprises 218 residues: Small ribosomal subunit protein uS3c (218 aa).

Positions 47–118 (VRKHIKSSSN…KLRMALTEVE (72 aa)) constitute a KH type-2 domain.

It belongs to the universal ribosomal protein uS3 family. Part of the 30S ribosomal subunit.

The protein resides in the plastid. The protein localises to the chloroplast. The protein is Small ribosomal subunit protein uS3c (rps3) of Anthoceros angustus (Hornwort).